Consider the following 394-residue polypeptide: Elongation factor Tu (394 aa).

Residues 10–204 (KEHANIGTIG…AVDTYIPTPE (195 aa)) enclose the tr-type G domain. A G1 region spans residues 19 to 26 (GHVDHGKT). 19–26 (GHVDHGKT) contacts GTP. Residue T26 coordinates Mg(2+). The interval 60–64 (GITIN) is G2. The segment at 81-84 (DCPG) is G3. Residues 81–85 (DCPGH) and 136–139 (NKVD) each bind GTP. The G4 stretch occupies residues 136 to 139 (NKVD). Positions 174–176 (SAL) are G5.

This sequence belongs to the TRAFAC class translation factor GTPase superfamily. Classic translation factor GTPase family. EF-Tu/EF-1A subfamily. As to quaternary structure, monomer.

The protein resides in the cytoplasm. It carries out the reaction GTP + H2O = GDP + phosphate + H(+). In terms of biological role, GTP hydrolase that promotes the GTP-dependent binding of aminoacyl-tRNA to the A-site of ribosomes during protein biosynthesis. The sequence is that of Elongation factor Tu from Staphylococcus aureus (strain COL).